Here is a 399-residue protein sequence, read N- to C-terminus: Enoyl-[acyl-carrier-protein] reductase [NADH] (399 aa).

NAD(+) is bound by residues 48–53 (GASTGY), 74–75 (FE), 111–112 (DA), and 139–140 (LA). Tyrosine 225 is a binding site for substrate. Tyrosine 235 serves as the catalytic Proton donor. Residues lysine 244 and 273-275 (VVT) each bind NAD(+).

Belongs to the TER reductase family. Monomer.

The catalysed reaction is a 2,3-saturated acyl-[ACP] + NAD(+) = a (2E)-enoyl-[ACP] + NADH + H(+). Its pathway is lipid metabolism; fatty acid biosynthesis. Functionally, involved in the final reduction of the elongation cycle of fatty acid synthesis (FAS II). Catalyzes the reduction of a carbon-carbon double bond in an enoyl moiety that is covalently linked to an acyl carrier protein (ACP). This Serratia proteamaculans (strain 568) protein is Enoyl-[acyl-carrier-protein] reductase [NADH].